Consider the following 219-residue polypeptide: Ribose-5-phosphate isomerase A (219 aa).

Substrate is bound by residues 28–31 (SGST), 81–84 (DGAD), and 94–97 (KGGG). Glu-103 acts as the Proton acceptor in catalysis. Residue Lys-121 coordinates substrate.

This sequence belongs to the ribose 5-phosphate isomerase family. As to quaternary structure, homodimer.

The catalysed reaction is aldehydo-D-ribose 5-phosphate = D-ribulose 5-phosphate. It participates in carbohydrate degradation; pentose phosphate pathway; D-ribose 5-phosphate from D-ribulose 5-phosphate (non-oxidative stage): step 1/1. Its function is as follows. Catalyzes the reversible conversion of ribose-5-phosphate to ribulose 5-phosphate. The polypeptide is Ribose-5-phosphate isomerase A (Haemophilus ducreyi (strain 35000HP / ATCC 700724)).